A 188-amino-acid chain; its full sequence is Putative nucleotidase OB0422 (188 aa).

This sequence belongs to the 5'(3')-deoxyribonucleotidase family.

In Oceanobacillus iheyensis (strain DSM 14371 / CIP 107618 / JCM 11309 / KCTC 3954 / HTE831), this protein is Putative nucleotidase OB0422.